Here is a 452-residue protein sequence, read N- to C-terminus: Exodeoxyribonuclease 7 large subunit (452 aa).

It belongs to the XseA family. In terms of assembly, heterooligomer composed of large and small subunits.

The protein localises to the cytoplasm. The catalysed reaction is Exonucleolytic cleavage in either 5'- to 3'- or 3'- to 5'-direction to yield nucleoside 5'-phosphates.. Functionally, bidirectionally degrades single-stranded DNA into large acid-insoluble oligonucleotides, which are then degraded further into small acid-soluble oligonucleotides. This chain is Exodeoxyribonuclease 7 large subunit, found in Bacillus mycoides (strain KBAB4) (Bacillus weihenstephanensis).